We begin with the raw amino-acid sequence, 243 residues long: MAELLLGVNIDHIATLRNARGTAYPDPVQAAFIAEQAGADGITVHLREDRRHITDRDVRILRQTLDTRMNLEMAVTEEMLAIAVETKPHFCCLVPEKRQEVTTEGGLDVAGQRDKMRDACKRLADAGIQVSLFIDADEEQIKAAAEVGAPFIEIHTGCYADAKTDAEQAQELARIAKAATFAASLGLKVNAGHGLTYHNVKAIAAIPEMHELNIGHAIIGRAVMTGLKDAVAEMKRLMLEARG.

3-amino-2-oxopropyl phosphate is bound at residue N9. 11–12 (DH) is a 1-deoxy-D-xylulose 5-phosphate binding site. R20 provides a ligand contact to 3-amino-2-oxopropyl phosphate. The Proton acceptor role is filled by H45. Positions 47 and 52 each coordinate 1-deoxy-D-xylulose 5-phosphate. E72 serves as the catalytic Proton acceptor. T102 contributes to the 1-deoxy-D-xylulose 5-phosphate binding site. The active-site Proton donor is the H193. 3-amino-2-oxopropyl phosphate is bound by residues G194 and 215 to 216 (GH).

The protein belongs to the PNP synthase family. As to quaternary structure, homooctamer; tetramer of dimers.

It is found in the cytoplasm. The catalysed reaction is 3-amino-2-oxopropyl phosphate + 1-deoxy-D-xylulose 5-phosphate = pyridoxine 5'-phosphate + phosphate + 2 H2O + H(+). It participates in cofactor biosynthesis; pyridoxine 5'-phosphate biosynthesis; pyridoxine 5'-phosphate from D-erythrose 4-phosphate: step 5/5. Catalyzes the complicated ring closure reaction between the two acyclic compounds 1-deoxy-D-xylulose-5-phosphate (DXP) and 3-amino-2-oxopropyl phosphate (1-amino-acetone-3-phosphate or AAP) to form pyridoxine 5'-phosphate (PNP) and inorganic phosphate. The polypeptide is Pyridoxine 5'-phosphate synthase (Escherichia coli O157:H7).